The sequence spans 93 residues: Small ribosomal subunit protein uS19 (93 aa).

The protein belongs to the universal ribosomal protein uS19 family.

In terms of biological role, protein S19 forms a complex with S13 that binds strongly to the 16S ribosomal RNA. The polypeptide is Small ribosomal subunit protein uS19 (Clavibacter michiganensis subsp. michiganensis (strain NCPPB 382)).